The primary structure comprises 418 residues: Serine--tRNA ligase (418 aa).

An L-serine-binding site is contributed by 231–233; it reads TAE. 262-264 contributes to the ATP binding site; the sequence is RSE. Glu-285 contributes to the L-serine binding site. 349–352 contributes to the ATP binding site; the sequence is EISS. Ser-385 is an L-serine binding site.

This sequence belongs to the class-II aminoacyl-tRNA synthetase family. Type-1 seryl-tRNA synthetase subfamily. As to quaternary structure, homodimer. The tRNA molecule binds across the dimer.

Its subcellular location is the cytoplasm. It carries out the reaction tRNA(Ser) + L-serine + ATP = L-seryl-tRNA(Ser) + AMP + diphosphate + H(+). It catalyses the reaction tRNA(Sec) + L-serine + ATP = L-seryl-tRNA(Sec) + AMP + diphosphate + H(+). It functions in the pathway aminoacyl-tRNA biosynthesis; selenocysteinyl-tRNA(Sec) biosynthesis; L-seryl-tRNA(Sec) from L-serine and tRNA(Sec): step 1/1. In terms of biological role, catalyzes the attachment of serine to tRNA(Ser). Is also able to aminoacylate tRNA(Sec) with serine, to form the misacylated tRNA L-seryl-tRNA(Sec), which will be further converted into selenocysteinyl-tRNA(Sec). The protein is Serine--tRNA ligase of Ureaplasma parvum serovar 3 (strain ATCC 27815 / 27 / NCTC 11736).